The sequence spans 560 residues: DNA ligase B (560 aa).

Lys-124 (N6-AMP-lysine intermediate) is an active-site residue.

This sequence belongs to the NAD-dependent DNA ligase family. LigB subfamily.

The catalysed reaction is NAD(+) + (deoxyribonucleotide)n-3'-hydroxyl + 5'-phospho-(deoxyribonucleotide)m = (deoxyribonucleotide)n+m + AMP + beta-nicotinamide D-nucleotide.. Its function is as follows. Catalyzes the formation of phosphodiester linkages between 5'-phosphoryl and 3'-hydroxyl groups in double-stranded DNA using NAD as a coenzyme and as the energy source for the reaction. The protein is DNA ligase B of Escherichia coli (strain ATCC 8739 / DSM 1576 / NBRC 3972 / NCIMB 8545 / WDCM 00012 / Crooks).